The chain runs to 698 residues: Elongation factor G (698 aa).

In terms of domain architecture, tr-type G spans 11–291; the sequence is THFRNIGIAA…AVVDYLPSPL (281 aa). Residues 20–27, 90–94, and 144–147 each bind GTP; these read AHIDAGKT, DTPGH, and NKMD.

This sequence belongs to the TRAFAC class translation factor GTPase superfamily. Classic translation factor GTPase family. EF-G/EF-2 subfamily.

It is found in the cytoplasm. In terms of biological role, catalyzes the GTP-dependent ribosomal translocation step during translation elongation. During this step, the ribosome changes from the pre-translocational (PRE) to the post-translocational (POST) state as the newly formed A-site-bound peptidyl-tRNA and P-site-bound deacylated tRNA move to the P and E sites, respectively. Catalyzes the coordinated movement of the two tRNA molecules, the mRNA and conformational changes in the ribosome. This Deinococcus radiodurans (strain ATCC 13939 / DSM 20539 / JCM 16871 / CCUG 27074 / LMG 4051 / NBRC 15346 / NCIMB 9279 / VKM B-1422 / R1) protein is Elongation factor G.